The sequence spans 332 residues: MKIVVDGMGGDYSPHIVVKGCIEAIKEYNNIDIIITGPEKLINDELQKYEYNKEKITVLDAKDVITNNEHPVMAIRRKKESSIYKALQMMKNKEADAVISAGSTGAFLAGATLVVGRIKGVSRPALAPIMPGKNGPFMIIDCGANAECKPSNLVQFAKMGEIYFENILNVKNPTVGLINIGSEEEKGNELTKEAHKLLKDMDFNFVGNVEPRDIPTGNTNVLVCDGFVGNTVLKMYEGVASTIFETLKDEIMSSFRTKIGGLLLKPVFKKFKKDYDYKEYGGAAFLGVDGICIKAHGSSDDKAFKNAIKQAINFYENGIIDKIKSHIEQKMI.

It belongs to the PlsX family. Homodimer. Probably interacts with PlsY.

It localises to the cytoplasm. It catalyses the reaction a fatty acyl-[ACP] + phosphate = an acyl phosphate + holo-[ACP]. The protein operates within lipid metabolism; phospholipid metabolism. Its function is as follows. Catalyzes the reversible formation of acyl-phosphate (acyl-PO(4)) from acyl-[acyl-carrier-protein] (acyl-ACP). This enzyme utilizes acyl-ACP as fatty acyl donor, but not acyl-CoA. This chain is Phosphate acyltransferase, found in Clostridium novyi (strain NT).